The following is a 643-amino-acid chain: Uromodulin (643 aa).

The first 26 residues, 1 to 26 (MKCLFSPNFMWMAAVVTSWVIIPAAT), serve as a signal peptide directing secretion. Positions 32–66 (KSCSECHSNATCTVDGAATTCACQEGFTGDGLECV) constitute an EGF-like 1 domain. Cystine bridges form between cysteine 34–cysteine 43, cysteine 37–cysteine 52, cysteine 54–cysteine 65, cysteine 71–cysteine 85, cysteine 79–cysteine 94, cysteine 96–cysteine 108, cysteine 114–cysteine 128, cysteine 122–cysteine 137, cysteine 139–cysteine 150, cysteine 152–cysteine 163, cysteine 157–cysteine 172, cysteine 176–cysteine 269, cysteine 197–cysteine 284, cysteine 219–cysteine 257, cysteine 225–cysteine 289, cysteine 250–cysteine 258, cysteine 299–cysteine 308, cysteine 302–cysteine 317, cysteine 319–cysteine 349, cysteine 337–cysteine 427, and cysteine 368–cysteine 391. N-linked (GlcNAc...) asparagine glycosylation is present at asparagine 40. One can recognise an EGF-like 2; calcium-binding domain in the interval 67 to 109 (DLDECAVLGAHNCSATKSCVNTLGSYTCVCPEGFLLSSELGCE). Residue asparagine 78 is glycosylated (N-linked (GlcNAc...) asparagine). An EGF-like 3; calcium-binding domain is found at 110–151 (DVDECAEPGLSRCHALATCINGEGNYSCVCPAGYLGDGRHCE). Asparagine 134 carries N-linked (GlcNAc...) asparagine glycosylation. Positions 152 to 173 (CSPGSCGPGLDCVREGDALVCV) are beta hairpin. Residues 174-293 (DPCQVHRILD…CHLAYCTDPS (120 aa)) form a D10C region. Residue asparagine 234 is glycosylated (N-linked (GlcNAc...) asparagine). Residue asparagine 277 is glycosylated (N-linked (GlcNAc...) asparagine). The region spanning 294 to 325 (SVEGTCEECRVDEDCKSDNGEWHCQCKQDFNV) is the EGF-like 4 domain. Asparagine 324 carries N-linked (GlcNAc...) asparagine glycosylation. The ZP-N stretch occupies residues 336–431 (ECGVDDIKLS…RINFACSYPL (96 aa)). Positions 336–587 (ECGVDDIKLS…EKCRPTCPET (252 aa)) constitute a ZP domain. Residues asparagine 398 and asparagine 449 are each glycosylated (N-linked (GlcNAc...) asparagine). The flexible ZP-N/ZP-C linker; important for secretion and polymerization into filaments stretch occupies residues 432-455 (DMKVSLKTSLQPMVSALNISMGGT). The segment at 456–466 (GTFTVRMALFQ) is internal hydrophobic patch (IHP). The tract at residues 456-587 (GTFTVRMALF…EKCRPTCPET (132 aa)) is ZP-C. 3 cysteine pairs are disulfide-bonded: cysteine 508–cysteine 568, cysteine 529–cysteine 584, and cysteine 573–cysteine 580. The N-linked (GlcNAc...) asparagine glycan is linked to asparagine 515. Residues 588 to 591 (RFRS) form an essential for cleavage by HPN region. Residues 600-608 (VLNLGPITR) form an external hydrophobic patch (EHP); regulates polymerization into filaments region. Serine 621 is lipidated: GPI-anchor amidated serine. The propeptide at 622–643 (SLGLLQVWLPLLLSATLTLMSP) is removed in mature form.

In terms of assembly, homodimer that then polymerizes into long filaments. The filaments can additionally assemble laterally to form a sheet. The filaments consist of a zigzag-shaped backbone with laterally protruding arms which interact with bacterial adhesin fimH. Two fimH molecules can bind to a single UMOD monomer. In terms of processing, N-glycosylated. Proteolytically cleaved at a conserved C-terminal proteolytic cleavage site to generate the secreted form found in urine. This cleavage is catalyzed by HPN.

The protein localises to the apical cell membrane. It localises to the basolateral cell membrane. Its subcellular location is the cell projection. It is found in the cilium membrane. The protein resides in the secreted. Functions in biogenesis and organization of the apical membrane of epithelial cells of the thick ascending limb of Henle's loop (TALH), where it promotes formation of complex filamentous gel-like structure that may play a role in the water barrier permeability. May serve as a receptor for binding and endocytosis of cytokines (IL-1, IL-2) and TNF. Facilitates neutrophil migration across renal epithelia. Functionally, in the urine, may contribute to colloid osmotic pressure, retards passage of positively charged electrolytes, and inhibits formation of liquid containing supersaturated salts and subsequent formation of salt crystals. Protects against urinary tract infections by binding to type 1 fimbriated E.coli. Binds to bacterial adhesin fimH which mediates the stable formation of bacterial aggregates, prevents the binding of E.coli to uroplakins UPK1A and UPK1B which act as urothelial receptors for type I fimbriae, and allows for pathogen clearance through micturation. Also promotes aggregation of other bacteria including K.pneumoniae, P.aeruginosa and S.mitis and so may also protect against other uropathogens. The sequence is that of Uromodulin (UMOD) from Bos taurus (Bovine).